The sequence spans 223 residues: Golgi SNAP receptor complex member 1 (223 aa).

An N-acetylserine modification is found at S2. The Cytoplasmic portion of the chain corresponds to 2-204 (SSQPSFVTIR…MKINTRRKKN (203 aa)). Position 164 is a phosphoserine (S164). The helical; Anchor for type IV membrane protein transmembrane segment at 205 to 222 (AFVLATITTLCILFLFFT) threads the bilayer. Position 223 (W223) is a topological domain, vesicular.

It belongs to the GOSR1 family. Component of several multiprotein Golgi SNARE complexes. Identified in a Golgi SNARE complex consisting of t-SNARES SED5, YKT6, and the v-SNARE SFT1. Interacts with BET1. Interacts with BOS1. Interacts with SEC22. Interacts with PEP12. Interacts with self.

The protein localises to the golgi apparatus membrane. In terms of biological role, involved in transport from the ER to the Golgi apparatus as well as in intra-Golgi transport. It belongs to a super-family of proteins called t-SNAREs or soluble NSF (N-ethylmaleimide-sensitive factor) attachment protein receptor. Rescues alpha-factor maturation defects. The chain is Golgi SNAP receptor complex member 1 (GOS1) from Saccharomyces cerevisiae (strain ATCC 204508 / S288c) (Baker's yeast).